Here is a 204-residue protein sequence, read N- to C-terminus: Rho GDP-dissociation inhibitor 1 (204 aa).

A disordered region spans residues 1 to 36 (MAEQEPTAEQLAQIAAENEEDEHSVNYKPPAQKSIQ). Residue alanine 2 is modified to N-acetylalanine. Position 34 is a phosphoserine (serine 34). At lysine 43 the chain carries N6-acetyllysine. Serine 47 bears the Phosphoserine mark. N6-acetyllysine occurs at positions 105 and 127. Residues lysine 138 and lysine 141 each participate in a glycyl lysine isopeptide (Lys-Gly) (interchain with G-Cter in SUMO1); alternate cross-link. Residues lysine 138 and lysine 141 each participate in a glycyl lysine isopeptide (Lys-Gly) (interchain with G-Cter in SUMO2); alternate cross-link. Lysine 141 is subject to N6-acetyllysine; alternate. Lysine 141 bears the N6-succinyllysine; alternate mark. Residue lysine 178 is modified to N6-acetyllysine.

The protein belongs to the Rho GDI family. In terms of assembly, monomer. Interacts with FER. Interacts with PLXNB3. Forms a heterodimer with RAC1. Interacts with RHOA, the affinity is increased by three orders of magnitude when RHOA is prenylated. Interacts with PSMD10; the interaction increases ARHGDIA association with RHOA, leading to ARHGDIA-mediated inactivation of RHOA and ROCK and prolonged AKT activation. Interacts with KANK2; the interaction is direct and may regulate the interaction of ARHGDIA with RHOA, RAC1 and CDC42. Interacts with RHOC. Interacts with CDC42. Interacts with NGFR (via death domain); NGFR binding decreases the affinity for RHOA. In kidney glomerulus, expressed in podocytes and mesangial cells.

The protein resides in the cytoplasm. Controls Rho proteins homeostasis. Regulates the GDP/GTP exchange reaction of the Rho proteins by inhibiting the dissociation of GDP from them, and the subsequent binding of GTP to them. Retains Rho proteins such as CDC42, RAC1 and RHOA in an inactive cytosolic pool, regulating their stability and protecting them from degradation. Actively involved in the recycling and distribution of activated Rho GTPases in the cell, mediates extraction from membranes of both inactive and activated molecules due its exceptionally high affinity for prenylated forms. Through the modulation of Rho proteins, may play a role in cell motility regulation. In glioma cells, inhibits cell migration and invasion by mediating the signals of SEMA5A and PLXNB3 that lead to inactivation of RAC1. The chain is Rho GDP-dissociation inhibitor 1 (Arhgdia) from Mus musculus (Mouse).